A 139-amino-acid polypeptide reads, in one-letter code: Putative pre-16S rRNA nuclease (139 aa).

This sequence belongs to the YqgF nuclease family.

The protein localises to the cytoplasm. In terms of biological role, could be a nuclease involved in processing of the 5'-end of pre-16S rRNA. This is Putative pre-16S rRNA nuclease from Rubrobacter xylanophilus (strain DSM 9941 / JCM 11954 / NBRC 16129 / PRD-1).